A 148-amino-acid polypeptide reads, in one-letter code: 3-dehydroquinate dehydratase (148 aa).

Tyrosine 23 (proton acceptor) is an active-site residue. Residues asparagine 75, histidine 81, and aspartate 88 each contribute to the substrate site. The Proton donor role is filled by histidine 101. Residues 102-103 (LS) and arginine 112 each bind substrate.

It belongs to the type-II 3-dehydroquinase family. In terms of assembly, homododecamer.

It carries out the reaction 3-dehydroquinate = 3-dehydroshikimate + H2O. It functions in the pathway metabolic intermediate biosynthesis; chorismate biosynthesis; chorismate from D-erythrose 4-phosphate and phosphoenolpyruvate: step 3/7. Catalyzes a trans-dehydration via an enolate intermediate. This chain is 3-dehydroquinate dehydratase, found in Xanthomonas campestris pv. campestris (strain 8004).